Here is a 217-residue protein sequence, read N- to C-terminus: Adapter protein MecA (217 aa).

Belongs to the MecA family. In terms of assembly, homodimer.

Its function is as follows. Enables the recognition and targeting of unfolded and aggregated proteins to the ClpC protease or to other proteins involved in proteolysis. This chain is Adapter protein MecA, found in Listeria innocua serovar 6a (strain ATCC BAA-680 / CLIP 11262).